The primary structure comprises 449 residues: Adenylosuccinate synthetase (449 aa).

GTP is bound by residues 37–43 (GDEGKGK) and 65–67 (GHT). Asp38 functions as the Proton acceptor in the catalytic mechanism. The Mg(2+) site is built by Asp38 and Gly65. Residues 38-41 (DEGK), 63-66 (NAGH), Thr155, Arg169, Asn247, Thr262, and Arg326 contribute to the IMP site. His66 functions as the Proton donor in the catalytic mechanism. 322–328 (VTTKRKR) is a binding site for substrate. GTP-binding positions include Arg328, 354–356 (KLD), and 437–439 (GVG).

The protein belongs to the adenylosuccinate synthetase family. As to quaternary structure, homodimer. Mg(2+) serves as cofactor.

It is found in the cytoplasm. It carries out the reaction IMP + L-aspartate + GTP = N(6)-(1,2-dicarboxyethyl)-AMP + GDP + phosphate + 2 H(+). Its pathway is purine metabolism; AMP biosynthesis via de novo pathway; AMP from IMP: step 1/2. Functionally, plays an important role in the de novo pathway and in the salvage pathway of purine nucleotide biosynthesis. Catalyzes the first committed step in the biosynthesis of AMP from IMP. The sequence is that of Adenylosuccinate synthetase from Drosophila willistoni (Fruit fly).